We begin with the raw amino-acid sequence, 153 residues long: Arginine repressor (153 aa).

This sequence belongs to the ArgR family.

It is found in the cytoplasm. It functions in the pathway amino-acid biosynthesis; L-arginine biosynthesis [regulation]. In terms of biological role, regulates arginine biosynthesis genes. This is Arginine repressor from Actinobacillus pleuropneumoniae serotype 5b (strain L20).